The sequence spans 102 residues: Small ribosomal subunit protein uS10 (102 aa).

This sequence belongs to the universal ribosomal protein uS10 family. Part of the 30S ribosomal subunit.

Involved in the binding of tRNA to the ribosomes. This chain is Small ribosomal subunit protein uS10, found in Nitrosopumilus maritimus (strain SCM1).